The sequence spans 605 residues: Golgi-associated RAB2 interactor protein 3 (605 aa).

2 disordered regions span residues 234–265 (GEGI…AART) and 407–529 (YMSE…ALQK). Low complexity predominate over residues 239-265 (HASHGTASAASPSTSTPGAAEGGAART). The segment covering 434–457 (KKDRHPSRKSSHHRKAGESHRRRA) has biased composition (basic residues). Positions 441-458 (RKSSHHRKAGESHRRRAG) match the Bipartite nuclear localization signal motif. The span at 463–473 (KASSHRSASGH) shows a compositional bias: polar residues. The segment covering 475-484 (NTRDDKKEKG) has biased composition (basic and acidic residues). Positions 489–500 (RGKRHGSSRKSS) are enriched in basic residues. The segment covering 513–526 (QELGKNQSASSTGA) has biased composition (polar residues). Ser592 is modified (phosphoserine).

Belongs to the GARIN family. As to quaternary structure, interacts (via N-terminus) with RAB2B (in GTP-bound form). Interacts with FRG1. As to expression, expressed in adult spermatocytes and spermatids (at protein level).

Its subcellular location is the golgi apparatus. The protein localises to the nucleus. The protein resides in the cajal body. Functionally, may be involved in RNA biogenesis. This chain is Golgi-associated RAB2 interactor protein 3, found in Homo sapiens (Human).